Consider the following 97-residue polypeptide: Small cell adhesion glycoprotein (97 aa).

Over 1 to 36 the chain is Extracellular; sequence MNNLPATPSPEELMTTPVFQAPETMSPQAEEASTAL. An O-linked (GalNAc...) threonine glycan is attached at threonine 7. O-linked (GalNAc...) serine glycosylation occurs at serine 9. O-linked (GalNAc...) threonine glycosylation is found at threonine 15, threonine 16, and threonine 24. O-linked (GalNAc...) serine glycosylation occurs at serine 26. The chain crosses the membrane as a helical; Signal-anchor for type III membrane protein span at residues 37 to 57; the sequence is IAVVITVVFLTLLSVVTLIFF. Residues 58-97 lie on the Cytoplasmic side of the membrane; that stretch reads YLYKNKGSYVTYEPAEGEPSAILQMETDSAKGKEKEEYFI.

Belongs to the SMAGP family. In terms of processing, O-glycosylated. The O-glycan is modified with sialic acid residues. In terms of tissue distribution, detected in brain (at protein level). Highly expressed in kidney and placenta. Detected in skin, breast, heart, lung, liver, prostate, spleen, small intestine, colon and stomach.

It localises to the cell membrane. The protein resides in the cytoplasmic vesicle membrane. In terms of biological role, may play a role in epithelial cell-cell contacts. May play a role in tumor invasiveness and metastasis formation. This is Small cell adhesion glycoprotein (Smagp) from Rattus norvegicus (Rat).